The primary structure comprises 244 residues: 5-oxoprolinase subunit A (244 aa).

This sequence belongs to the LamB/PxpA family. In terms of assembly, forms a complex composed of PxpA, PxpB and PxpC.

The catalysed reaction is 5-oxo-L-proline + ATP + 2 H2O = L-glutamate + ADP + phosphate + H(+). In terms of biological role, catalyzes the cleavage of 5-oxoproline to form L-glutamate coupled to the hydrolysis of ATP to ADP and inorganic phosphate. This Escherichia fergusonii (strain ATCC 35469 / DSM 13698 / CCUG 18766 / IAM 14443 / JCM 21226 / LMG 7866 / NBRC 102419 / NCTC 12128 / CDC 0568-73) protein is 5-oxoprolinase subunit A.